The sequence spans 191 residues: Orotate phosphoribosyltransferase (191 aa).

116 to 124 (EDVVTTGGS) serves as a coordination point for 5-phospho-alpha-D-ribose 1-diphosphate. 2 residues coordinate orotate: Thr-120 and Arg-148.

The protein belongs to the purine/pyrimidine phosphoribosyltransferase family. PyrE subfamily. Homodimer. Mg(2+) serves as cofactor.

The catalysed reaction is orotidine 5'-phosphate + diphosphate = orotate + 5-phospho-alpha-D-ribose 1-diphosphate. It participates in pyrimidine metabolism; UMP biosynthesis via de novo pathway; UMP from orotate: step 1/2. In terms of biological role, catalyzes the transfer of a ribosyl phosphate group from 5-phosphoribose 1-diphosphate to orotate, leading to the formation of orotidine monophosphate (OMP). The chain is Orotate phosphoribosyltransferase from Carboxydothermus hydrogenoformans (strain ATCC BAA-161 / DSM 6008 / Z-2901).